Reading from the N-terminus, the 500-residue chain is NAD(P)H-quinone oxidoreductase chain 4, chloroplastic (500 aa).

14 helical membrane-spanning segments follow: residues 4–24 (FPWLTILVVLPIFAGSLIFFL), 37–57 (ISICLLEFLLMTYAFCYHFQL), 87–107 (LGSILLTGFITTLATLAAWPI), 113–130 (LFYFLMLAMYSGQIGLFS), 134–154 (LLLFFIMWELELIPVYLLLSM), 167–187 (FILYTAGGSIFFLIGVLGMGL), 211–231 (ILLYFGFLIAYAVKLPIIPLH), 242–262 (HYSTCMLLAGILLKMGAYGLI), 272–292 (AHYLFSPWLVIIGAIQIIYAA), 313–333 (MGFIIIGIGSITNIGLNGAIL), 334–354 (QILSHGFIGATLFFLAGTASD), 386–406 (LALPGMSGFVAELVVFFGLIT), 417–437 (LITFVMAIGMILTPIYLLSML), and 462–482 (LFILICIFLPVIGIGIYPDFV).

Belongs to the complex I subunit 4 family.

It is found in the plastid. The protein resides in the chloroplast thylakoid membrane. The enzyme catalyses a plastoquinone + NADH + (n+1) H(+)(in) = a plastoquinol + NAD(+) + n H(+)(out). It carries out the reaction a plastoquinone + NADPH + (n+1) H(+)(in) = a plastoquinol + NADP(+) + n H(+)(out). This is NAD(P)H-quinone oxidoreductase chain 4, chloroplastic (ndhD) from Triticum aestivum (Wheat).